A 405-amino-acid chain; its full sequence is Type III polyketide synthase 10 (405 aa).

The span at 1–18 (MVSTNAGGIASKQASSMA) shows a compositional bias: polar residues. The segment at 1-20 (MVSTNAGGIASKQASSMAPN) is disordered. The active-site Nucleophile is C170.

Belongs to the thiolase-like superfamily. Chalcone/stilbene synthases family. In terms of assembly, interacts with STS1. As to expression, expressed in adult flowers.

It localises to the endoplasmic reticulum. Functionally, plant type III polyketide synthases (PKSs) that catalyzes the condensation of fatty acyl-CoA with malonyl-CoA to generate triketide and tetraketide alpha-pyrones, the main components of pollen exine and potential sporopollenin precursors. May be involved in the synthesis of sporopollenin precursors in tapetal cells to regulate pollen wall formation. Required for exine and Ubisch body formation in anthers. Does not possess chalcone synthase (CHS) activity in vitro with the substrates 4-coumaroyl-CoA and malonyl-CoA. The polypeptide is Type III polyketide synthase 10 (Oryza sativa subsp. japonica (Rice)).